An 85-amino-acid polypeptide reads, in one-letter code: MAHKKGQGSSRNGRDSNAQRRGVKVYGGQSIHAGSIIIRQLGTKIHPGNNVGMGKDYTLFSLIDGVVKFERLDKKRKKVSVYATA.

The disordered stretch occupies residues 1 to 24 (MAHKKGQGSSRNGRDSNAQRRGVK).

The protein belongs to the bacterial ribosomal protein bL27 family.

This is Large ribosomal subunit protein bL27 from Syntrophus aciditrophicus (strain SB).